Consider the following 493-residue polypeptide: Na(+)/H(+) antiporter subunit D (493 aa).

Transmembrane regions (helical) follow at residues 4–23 (LVILPILIPFIVGSFLILFA), 30–52 (RVISGFAVVGMLLVSIYLAVDVY), 72–94 (LVADLFATMMVILASIVGVVCLF), 107–126 (YYFYPFYFFLLAGVNGAFLT), 130–149 (FNLFVFFEVMLIASYILIVL), 162–184 (YVVINVFASILFIVGVAYIYSIT), 204–226 (VLNVIAVIFLVVFAMKGGLFPLY), 233–255 (YFGPPAAIAALFGGLLTKVGIYA), 270–292 (FTHTLILILAGLTMFFGVLGAVS), 299–321 (ILSYHIISQVGYMVMGLGIYTQL), 325–347 (GAIYYIAHHIIVKAALFLFAGAT), 368–390 (WLAWMFFISAISLAGIPPLSGFF), 405–427 (YIIAAVALAVGLLTLFSMMKIFI), and 448–470 (LLLPIVPLVALTIILGFAAEPIF).

The protein belongs to the CPA3 antiporters (TC 2.A.63) subunit D family. In terms of assembly, forms a heterooligomeric complex that consists of seven subunits: MrpA, MrpB, MrpC, MrpD, MrpE, MrpF and MrpG.

It localises to the cell membrane. In terms of biological role, mnh complex is a Na(+)Li(+)/H(+) antiporter involved in Na(+) and/or Li(+) excretion and Na(+) resistance. Na(+)/H(+) antiport consumes a transmembrane electrical potential, and is thus inferred to be electrogenic. Does not transport K(+), Ca(2+) or Mg(2+). Its function is as follows. Mrp complex is a Na(+)/H(+) antiporter involved in Na(+) excretion and Na(+) resistance. The sequence is that of Na(+)/H(+) antiporter subunit D (mrpD) from Alkalihalophilus pseudofirmus (strain ATCC BAA-2126 / JCM 17055 / OF4) (Bacillus pseudofirmus).